Here is a 188-residue protein sequence, read N- to C-terminus: Pterocarpan synthase 1 (188 aa).

The first 23 residues, 1–23 (MAKSTTFFISLTLPFLLLSVVTA), serve as a signal peptide directing secretion. The N-linked (GlcNAc...) asparagine glycan is linked to N127.

This sequence belongs to the plant dirigent protein family. As to quaternary structure, homodimer.

The protein resides in the secreted. The protein localises to the extracellular space. It is found in the apoplast. The enzyme catalyses a (4R)-4,2'-dihydroxyisoflavan = a pterocarpan + H2O.. It catalyses the reaction (3R,4R)-7,2'-dihydroxy-4'-methoxyisoflavanol = (-)-medicarpin + H2O. The catalysed reaction is (3S,4R)-7,2'-dihydroxy-4'-methoxyisoflavanol = (+)-medicarpin + H2O. It carries out the reaction (3R,4R)-3-(6-hydroxy-1,3-benzodioxol-5-yl)-3,4-dihydro-2H-chromene-4,7-diol = (-)-maackiain + H2O. The enzyme catalyses (3R,4R)-7,2',4'-trihydroxyisoflavanol = (6aR,11aR)-3,9-dihydroxypterocarpan + H2O. Functionally, involved in pterocarpan phytoalexin biosynthesis. Catalyzes the last step in the biosynthesis of the phytoalexin medicarpin, and thereby contributes to plant defense reactions. Dirigent proteins impart stereoselectivity on the phenoxy radical-coupling reaction, yielding optically active lignans from two molecules of coniferyl alcohol in the biosynthesis of lignans, flavonolignans, and alkaloids and thus plays a central role in plant secondary metabolism. The protein is Pterocarpan synthase 1 of Glycyrrhiza echinata (Licorice).